The primary structure comprises 470 residues: Argininosuccinate lyase (470 aa).

It belongs to the lyase 1 family. Argininosuccinate lyase subfamily.

Its subcellular location is the cytoplasm. It catalyses the reaction 2-(N(omega)-L-arginino)succinate = fumarate + L-arginine. Its pathway is amino-acid biosynthesis; L-arginine biosynthesis; L-arginine from L-ornithine and carbamoyl phosphate: step 3/3. In Leptospira borgpetersenii serovar Hardjo-bovis (strain JB197), this protein is Argininosuccinate lyase.